A 363-amino-acid chain; its full sequence is Peptide chain release factor 2 (363 aa).

Q251 carries the post-translational modification N5-methylglutamine.

The protein belongs to the prokaryotic/mitochondrial release factor family. Post-translationally, methylated by PrmC. Methylation increases the termination efficiency of RF2.

The protein resides in the cytoplasm. In terms of biological role, peptide chain release factor 2 directs the termination of translation in response to the peptide chain termination codons UGA and UAA. The sequence is that of Peptide chain release factor 2 from Helicobacter pylori (strain Shi470).